The primary structure comprises 301 residues: Ribosomal protein L11 methyltransferase (301 aa).

The S-adenosyl-L-methionine site is built by Thr146, Gly167, Asp189, and Asn237.

The protein belongs to the methyltransferase superfamily. PrmA family.

It is found in the cytoplasm. It carries out the reaction L-lysyl-[protein] + 3 S-adenosyl-L-methionine = N(6),N(6),N(6)-trimethyl-L-lysyl-[protein] + 3 S-adenosyl-L-homocysteine + 3 H(+). Methylates ribosomal protein L11. The polypeptide is Ribosomal protein L11 methyltransferase (Prochlorococcus marinus (strain MIT 9303)).